We begin with the raw amino-acid sequence, 120 residues long: Chaperonin GroEL (120 aa).

Position 23–27 (23–27 (DGTTT)) interacts with ATP.

It belongs to the chaperonin (HSP60) family. In terms of assembly, forms a cylinder of 14 subunits composed of two heptameric rings stacked back-to-back. Interacts with the co-chaperonin GroES.

It is found in the cytoplasm. It catalyses the reaction ATP + H2O + a folded polypeptide = ADP + phosphate + an unfolded polypeptide.. Together with its co-chaperonin GroES, plays an essential role in assisting protein folding. The GroEL-GroES system forms a nano-cage that allows encapsulation of the non-native substrate proteins and provides a physical environment optimized to promote and accelerate protein folding. In Mycobacterium xenopi, this protein is Chaperonin GroEL.